A 689-amino-acid polypeptide reads, in one-letter code: DNA ligase (689 aa).

NAD(+)-binding positions include 40–44 (DSEYD), 89–90 (SL), and Glu121. Residue Lys123 is the N6-AMP-lysine intermediate of the active site. Arg144, Glu179, Lys295, and Lys319 together coordinate NAD(+). Zn(2+)-binding residues include Cys413, Cys416, Cys431, and Cys437. One can recognise a BRCT domain in the interval 610–689 (REQSSLTDKI…EEWLTLIKNV (80 aa)).

The protein belongs to the NAD-dependent DNA ligase family. LigA subfamily. The cofactor is Mg(2+). Mn(2+) serves as cofactor.

The enzyme catalyses NAD(+) + (deoxyribonucleotide)n-3'-hydroxyl + 5'-phospho-(deoxyribonucleotide)m = (deoxyribonucleotide)n+m + AMP + beta-nicotinamide D-nucleotide.. Functionally, DNA ligase that catalyzes the formation of phosphodiester linkages between 5'-phosphoryl and 3'-hydroxyl groups in double-stranded DNA using NAD as a coenzyme and as the energy source for the reaction. It is essential for DNA replication and repair of damaged DNA. This chain is DNA ligase, found in Rickettsia rickettsii (strain Iowa).